The sequence spans 372 residues: 18-hydroxynorfluorocurarine reductase (372 aa).

Residues cysteine 47, aspartate 50, histidine 69, glutamate 70, cysteine 100, cysteine 103, cysteine 106, cysteine 114, and cysteine 172 each contribute to the Zn(2+) site. Residues 197-202 (GLGGIG), lysine 226, 283-285 (LGA), serine 307, and arginine 354 each bind NADP(+).

This sequence belongs to the zinc-containing alcohol dehydrogenase family. In terms of assembly, homodimer. It depends on Zn(2+) as a cofactor.

It catalyses the reaction (19E)-cur-19-en-17-al + NADP(+) = norfluorocurarine + NADPH + H(+). The catalysed reaction is 17,18-epoxy-17-hydroxycur-19-ene + NADP(+) = 18-hydroxynorfluorocurarine + NADPH + H(+). It participates in alkaloid biosynthesis. In terms of biological role, alcohol dehydrogenase involved in the biosynthesis of curare monoterpene indole alkaloids (MIAs), natural products such as diaboline, a pharmacologically active compound used to regulate blood pressure. Curare alkaloids act as animal glycine receptor antagonists. Catalyzes the conversion of norfluorocurarine to desoxy Wieland-Gumlich aldehyde, and of 18-OH norfluorocurarine to Wieland-Gumlich aldehyde. This chain is 18-hydroxynorfluorocurarine reductase, found in Strychnos sp.